A 552-amino-acid chain; its full sequence is Phosphoglucomutase (552 aa).

Residue serine 143 is the Phosphoserine intermediate of the active site. Serine 143, aspartate 295, aspartate 297, and aspartate 299 together coordinate Mg(2+).

Belongs to the phosphohexose mutase family. The cofactor is Mg(2+).

The enzyme catalyses alpha-D-glucose 1-phosphate = alpha-D-glucose 6-phosphate. It participates in glycolipid metabolism; diglucosyl-diacylglycerol biosynthesis. Functionally, catalyzes the interconversion between glucose-6-phosphate and alpha-glucose-1-phosphate. This is the first step in the biosynthesis of diglucosyl-diacylglycerol (Glc2-DAG), i.e. the predominant glycolipid found in the S.aureus membrane, which is also used as a membrane anchor for lipoteichoic acid (LTA). This chain is Phosphoglucomutase (pgcA), found in Staphylococcus aureus (strain bovine RF122 / ET3-1).